We begin with the raw amino-acid sequence, 106 residues long: U1-lycotoxin-Ls1b (106 aa).

The N-terminal stretch at 1-19 (MKVLVVVALLVTLISYSSS) is a signal peptide. Residues 20–40 (EGIDDLEADELLSLMANEQTR) constitute a propeptide that is removed on maturation. 4 disulfides stabilise this stretch: cysteine 43–cysteine 58, cysteine 50–cysteine 67, cysteine 57–cysteine 85, and cysteine 69–cysteine 83.

It belongs to the neurotoxin 19 (CSTX) family. 04 (U1-Lctx) subfamily. In terms of tissue distribution, expressed by the venom gland.

The protein localises to the secreted. The polypeptide is U1-lycotoxin-Ls1b (Lycosa singoriensis (Wolf spider)).